A 529-amino-acid chain; its full sequence is Peptide chain release factor 3 (529 aa).

The 270-residue stretch at 11–280 (AKRRTFAIIS…GLVEWAPAPM (270 aa)) folds into the tr-type G domain. GTP contacts are provided by residues 20–27 (SHPDAGKT), 88–92 (DTPGH), and 142–145 (NKLD).

Belongs to the TRAFAC class translation factor GTPase superfamily. Classic translation factor GTPase family. PrfC subfamily.

The protein resides in the cytoplasm. Increases the formation of ribosomal termination complexes and stimulates activities of RF-1 and RF-2. It binds guanine nucleotides and has strong preference for UGA stop codons. It may interact directly with the ribosome. The stimulation of RF-1 and RF-2 is significantly reduced by GTP and GDP, but not by GMP. The polypeptide is Peptide chain release factor 3 (Shigella dysenteriae serotype 1 (strain Sd197)).